Consider the following 162-residue polypeptide: NADH-quinone oxidoreductase subunit I (162 aa).

2 4Fe-4S ferredoxin-type domains span residues 52-82 (LRRY…IEAG) and 93-122 (VRYD…EGPN). Cysteine 62, cysteine 65, cysteine 68, cysteine 72, cysteine 102, cysteine 105, cysteine 108, and cysteine 112 together coordinate [4Fe-4S] cluster.

It belongs to the complex I 23 kDa subunit family. As to quaternary structure, NDH-1 is composed of 14 different subunits. Subunits NuoA, H, J, K, L, M, N constitute the membrane sector of the complex. The cofactor is [4Fe-4S] cluster.

It localises to the cell inner membrane. It catalyses the reaction a quinone + NADH + 5 H(+)(in) = a quinol + NAD(+) + 4 H(+)(out). In terms of biological role, NDH-1 shuttles electrons from NADH, via FMN and iron-sulfur (Fe-S) centers, to quinones in the respiratory chain. The immediate electron acceptor for the enzyme in this species is believed to be ubiquinone. Couples the redox reaction to proton translocation (for every two electrons transferred, four hydrogen ions are translocated across the cytoplasmic membrane), and thus conserves the redox energy in a proton gradient. This is NADH-quinone oxidoreductase subunit I from Bradyrhizobium sp. (strain ORS 278).